Reading from the N-terminus, the 84-residue chain is UPF0297 protein NT01CX_2279 (84 aa).

Belongs to the UPF0297 family.

The protein is UPF0297 protein NT01CX_2279 of Clostridium novyi (strain NT).